The following is a 256-amino-acid chain: Ubiquinone/menaquinone biosynthesis C-methyltransferase UbiE (256 aa).

Residues Thr79, Asp100, and 128-129 each bind S-adenosyl-L-methionine; that span reads DA.

The protein belongs to the class I-like SAM-binding methyltransferase superfamily. MenG/UbiE family.

The catalysed reaction is a 2-demethylmenaquinol + S-adenosyl-L-methionine = a menaquinol + S-adenosyl-L-homocysteine + H(+). It carries out the reaction a 2-methoxy-6-(all-trans-polyprenyl)benzene-1,4-diol + S-adenosyl-L-methionine = a 5-methoxy-2-methyl-3-(all-trans-polyprenyl)benzene-1,4-diol + S-adenosyl-L-homocysteine + H(+). The protein operates within quinol/quinone metabolism; menaquinone biosynthesis; menaquinol from 1,4-dihydroxy-2-naphthoate: step 2/2. It participates in cofactor biosynthesis; ubiquinone biosynthesis. Its function is as follows. Methyltransferase required for the conversion of demethylmenaquinol (DMKH2) to menaquinol (MKH2) and the conversion of 2-polyprenyl-6-methoxy-1,4-benzoquinol (DDMQH2) to 2-polyprenyl-3-methyl-6-methoxy-1,4-benzoquinol (DMQH2). The polypeptide is Ubiquinone/menaquinone biosynthesis C-methyltransferase UbiE (Stutzerimonas stutzeri (strain A1501) (Pseudomonas stutzeri)).